A 434-amino-acid polypeptide reads, in one-letter code: Cobyrinate a,c-diamide synthase (434 aa).

The GATase cobBQ-type domain occupies 240-430; it reads KAYVAYDSAF…SHFHFSRTRR (191 aa). Cysteine 322 functions as the Nucleophile in the catalytic mechanism.

Belongs to the CobB/CbiA family. Mg(2+) is required as a cofactor.

The catalysed reaction is cob(II)yrinate + 2 L-glutamine + 2 ATP + 2 H2O = cob(II)yrinate a,c diamide + 2 L-glutamate + 2 ADP + 2 phosphate + 2 H(+). It participates in cofactor biosynthesis; adenosylcobalamin biosynthesis; cob(II)yrinate a,c-diamide from sirohydrochlorin (anaerobic route): step 10/10. Functionally, catalyzes the ATP-dependent amidation of the two carboxylate groups at positions a and c of cobyrinate, using either L-glutamine or ammonia as the nitrogen source. This is Cobyrinate a,c-diamide synthase from Sulfolobus acidocaldarius (strain ATCC 33909 / DSM 639 / JCM 8929 / NBRC 15157 / NCIMB 11770).